A 110-amino-acid polypeptide reads, in one-letter code: Cytochrome bo(3) ubiquinol oxidase subunit 4 (110 aa).

The Cytoplasmic segment spans residues 1–18 (MANAHDTHHEGNHGSVKS). Residues 19-39 (YMIGFILSIILTAIPFGLAMS) traverse the membrane as a helical segment. The Periplasmic segment spans residues 40–46 (PSLPKNL). The helical transmembrane segment at 47–67 (TVLIIVAMAVIQVVVHLVYFL) threads the bilayer. Residues 68 to 78 (HMDRSKEQRNN) lie on the Cytoplasmic side of the membrane. The chain crosses the membrane as a helical span at residues 79–99 (VWTFLFTTLVIALLVGLSLWI). At 100–110 (MFSIHFEMLAK) the chain is on the periplasmic side.

It belongs to the cytochrome c oxidase bacterial subunit 4 family. As to quaternary structure, heterooctamer of two A chains, two B chains, two C chains and two D chains.

It localises to the cell inner membrane. Cytochrome bo(3) ubiquinol terminal oxidase is the component of the aerobic respiratory chain of E.coli that predominates when cells are grown at high aeration. Has proton pump activity across the membrane in addition to electron transfer, pumping 2 protons/electron. The chain is Cytochrome bo(3) ubiquinol oxidase subunit 4 (cyoD) from Pseudomonas putida (Arthrobacter siderocapsulatus).